Reading from the N-terminus, the 758-residue chain is Probable ubiquitin carboxyl-terminal hydrolase creB (758 aa).

The interval 1–27 is disordered; the sequence is MGSFLRSFRRDVGSSTPSVGATPAKKE. Residues 57–468 enclose the USP domain; sequence FGMENYGNTC…CAYVLFYQET (412 aa). The active-site Nucleophile is Cys-66. Disordered stretches follow at residues 116-148 and 243-268; these read AEAQ…DSSE and QPIP…SKTP. The segment covering 253–268 has biased composition (polar residues); the sequence is TTDSSRQSISSGSKTP. His-419 (proton acceptor) is an active-site residue. Residues 514-744 are disordered; sequence IPVQDEPQRH…KGDRAGHGKW (231 aa). Positions 554–563 are enriched in pro residues; that stretch reads ATPPPVPPIP. Positions 573–631 form a coiled coil; sequence KKSDIQSKKERAKEEKERKAAEKEMEKQRRKEQEARVKENQRREEAELKAALEASKASK. Composition is skewed to basic and acidic residues over residues 573–650 and 729–740; these read KKSD…DPKR and DALKSPKGDRAG.

The protein belongs to the peptidase C19 family. As to quaternary structure, interacts with creA, creC and qutD.

The catalysed reaction is Thiol-dependent hydrolysis of ester, thioester, amide, peptide and isopeptide bonds formed by the C-terminal Gly of ubiquitin (a 76-residue protein attached to proteins as an intracellular targeting signal).. Ubiquitin thioesterase component of the regulatory network controlling carbon source utilization through ubiquitination and deubiquitination involving creA, creB, creC, creD and acrB. Deubiquitinates the creA catabolic repressor and the quinate permease qutD. Also plays a role in response to carbon starvation and the control of extracellular proteases activity. In Aspergillus niger (strain ATCC MYA-4892 / CBS 513.88 / FGSC A1513), this protein is Probable ubiquitin carboxyl-terminal hydrolase creB (creB).